The primary structure comprises 255 residues: Acetylglutamate kinase (255 aa).

Substrate is bound by residues Gly-40–Gly-41, Arg-62, and Asn-153.

Belongs to the acetylglutamate kinase family. ArgB subfamily.

The protein resides in the cytoplasm. The catalysed reaction is N-acetyl-L-glutamate + ATP = N-acetyl-L-glutamyl 5-phosphate + ADP. It participates in amino-acid biosynthesis; L-arginine biosynthesis; N(2)-acetyl-L-ornithine from L-glutamate: step 2/4. Functionally, catalyzes the ATP-dependent phosphorylation of N-acetyl-L-glutamate. This Bacillus anthracis (strain A0248) protein is Acetylglutamate kinase.